We begin with the raw amino-acid sequence, 365 residues long: Chorismate synthase (365 aa).

R46 contributes to the NADP(+) binding site. FMN is bound by residues 123–125 (RSS), 241–242 (NG), G281, 296–300 (KPTPS), and R322.

This sequence belongs to the chorismate synthase family. Homotetramer. FMNH2 is required as a cofactor.

The catalysed reaction is 5-O-(1-carboxyvinyl)-3-phosphoshikimate = chorismate + phosphate. It functions in the pathway metabolic intermediate biosynthesis; chorismate biosynthesis; chorismate from D-erythrose 4-phosphate and phosphoenolpyruvate: step 7/7. In terms of biological role, catalyzes the anti-1,4-elimination of the C-3 phosphate and the C-6 proR hydrogen from 5-enolpyruvylshikimate-3-phosphate (EPSP) to yield chorismate, which is the branch point compound that serves as the starting substrate for the three terminal pathways of aromatic amino acid biosynthesis. This reaction introduces a second double bond into the aromatic ring system. The sequence is that of Chorismate synthase from Helicobacter pylori (strain Shi470).